The primary structure comprises 267 residues: Small ribosomal subunit protein uS2 (267 aa).

The disordered stretch occupies residues 224–267; it reads GRQGEDQVDEKTFEGQKSEAAEGDKKTADNSMEDIVNAVEGDNK. Residues 225–251 show a composition bias toward basic and acidic residues; the sequence is RQGEDQVDEKTFEGQKSEAAEGDKKTA.

The protein belongs to the universal ribosomal protein uS2 family.

The sequence is that of Small ribosomal subunit protein uS2 from Levilactobacillus brevis (strain ATCC 367 / BCRC 12310 / CIP 105137 / JCM 1170 / LMG 11437 / NCIMB 947 / NCTC 947) (Lactobacillus brevis).